Here is a 300-residue protein sequence, read N- to C-terminus: Cholesterol 25-hydroxylase-like protein (300 aa).

Asn-9 carries an N-linked (GlcNAc...) asparagine glycan. 3 helical membrane-spanning segments follow: residues 54 to 73 (YTWV…VPFF), 95 to 115 (LQGW…LIWV), and 130 to 152 (MLSQ…HYIN). A Fatty acid hydroxylase domain is found at 135–266 (AIFFLAFDFT…WFNYLDRLMG (132 aa)). Positions 148-152 (FHYIN) match the Histidine box-1 motif. The Histidine box-2 signature appears at 163–167 (HSVHH). Residues 192–212 (ITTIPWIFPTHCLTYWIWFFI) traverse the membrane as a helical segment. The short motif at 242-248 (AHDMHHL) is the Histidine box-3 element.

It belongs to the sterol desaturase family. It depends on Fe cation as a cofactor.

It is found in the membrane. Probable sterol desaturase. The chain is Cholesterol 25-hydroxylase-like protein from Caenorhabditis elegans.